The following is a 388-amino-acid chain: L-arabinitol 4-dehydrogenase (388 aa).

Zn(2+) is bound by residues cysteine 55, histidine 80, glutamate 81, cysteine 110, cysteine 113, cysteine 116, cysteine 124, and glutamate 165. Residues 192-193 (PI), aspartate 213, arginine 218, isoleucine 293, and 317-319 (QYR) each bind NAD(+).

Belongs to the zinc-containing alcohol dehydrogenase family. In terms of assembly, homotetramer. The cofactor is Zn(2+).

The catalysed reaction is L-arabinitol + NAD(+) = L-xylulose + NADH + H(+). It functions in the pathway carbohydrate degradation; L-arabinose degradation via L-arabinitol; D-xylulose 5-phosphate from L-arabinose (fungal route): step 2/5. Its function is as follows. Catalyzes the NAD-dependent oxidation of L-arabinitol to L-xylulose in the fungal L-arabinose catabolic pathway. L-arabinose catabolism is important for using plant material as a carbon source. NADP cannot act as a cosubstrate. The sequence is that of L-arabinitol 4-dehydrogenase (lad) from Talaromyces emersonii (Thermophilic fungus).